A 122-amino-acid polypeptide reads, in one-letter code: UPF0102 protein Mpe_A3766 (122 aa).

Belongs to the UPF0102 family.

The polypeptide is UPF0102 protein Mpe_A3766 (Methylibium petroleiphilum (strain ATCC BAA-1232 / LMG 22953 / PM1)).